We begin with the raw amino-acid sequence, 599 residues long: Peptidyl-Asp metalloendopeptidase (599 aa).

An N-terminal signal peptide occupies residues 1–20; sequence MKKSLLCSTLALAVASAAQA. Position 164 (histidine 164) interacts with Zn(2+). Residue glutamate 165 is part of the active site. Zn(2+) contacts are provided by histidine 168 and histidine 174. Residues 265 to 285 form a disordered region; the sequence is PTKVPGTVNPGSGGDTPTPPD. The 126-residue stretch at 458-583 folds into the CBM-cenC domain; sequence YDFESGIGGW…KRAELMILSG (126 aa).

This sequence belongs to the peptidase M72 family. Interacts with BamI, the product of its coregulated adjacent gene, which inhibits its protease activity. The cofactor is Zn(2+). In terms of processing, made as a membrane-associated pre-pro-protein, which is exported to the periplasm with removal of the signal peptide, leading to a protein with a molecular mass of 65 kDa, that likely contains the metzincin domain plus tandem carbohydrate-binding domains. Undergoes processing during export to the extracellular milieu, probably by autocatalysis, yielding a (mature length) 25 kDa protein that most likely corresponds to the metzincin domain only.

The protein resides in the secreted. It catalyses the reaction Cleavage of Xaa-|-Asp, Xaa-|-Glu and Xaa-|-cysteic acid bonds.. With respect to regulation, is inhibited by BamI, the product of its coregulated adjacent gene. Its function is as follows. Metalloprotease with endopeptidase activity. Specifically cleaves on the N-terminal side of aspartyl, glutamyl and cysteic acid residues. Mep72 appears to be a secreted biofilm-specific regulator that affects the processing of a very specific subset of virulence factors exported by the type III secretion machinery as well as flagellar proteins. Binds directly to ExoS and PcrV and affects the processing of these proteins in the biofilm secretome, but contrary to expectation, Mep72 seems to protect these targets against proteolytic processing/degradation. This Pseudomonas aeruginosa (strain ATCC 15692 / DSM 22644 / CIP 104116 / JCM 14847 / LMG 12228 / 1C / PRS 101 / PAO1) protein is Peptidyl-Asp metalloendopeptidase.